The chain runs to 277 residues: Indole-3-glycerol phosphate synthase (277 aa).

The protein belongs to the TrpC family.

It catalyses the reaction 1-(2-carboxyphenylamino)-1-deoxy-D-ribulose 5-phosphate + H(+) = (1S,2R)-1-C-(indol-3-yl)glycerol 3-phosphate + CO2 + H2O. The protein operates within amino-acid biosynthesis; L-tryptophan biosynthesis; L-tryptophan from chorismate: step 4/5. The chain is Indole-3-glycerol phosphate synthase from Pseudomonas putida (strain ATCC 700007 / DSM 6899 / JCM 31910 / BCRC 17059 / LMG 24140 / F1).